Here is a 168-residue protein sequence, read N- to C-terminus: Transcriptional regulator MraZ (168 aa).

2 consecutive SpoVT-AbrB domains span residues 8-51 (EYNQ…GGDR) and 90-140 (ALNM…KADT).

Belongs to the MraZ family. As to quaternary structure, forms oligomers.

The protein resides in the cytoplasm. It is found in the nucleoid. The protein is Transcriptional regulator MraZ of Cereibacter sphaeroides (strain ATCC 17025 / ATH 2.4.3) (Rhodobacter sphaeroides).